The following is a 464-amino-acid chain: E3 ubiquitin-protein ligase TRAIP (464 aa).

An RING-type; atypical zinc finger spans residues 7–50 (CTICSDFFDNARDVAAITCGHTFHQECLLQWFHSAPHRTCPQCR). 2 coiled-coil regions span residues 142 to 186 (LDKQ…MIRD) and 236 to 277 (AQKA…LQKT). Positions 439–464 (KRKKVSRPTACTSSLANQPRLEDFLK) are disordered. The short motif at 456–464 (QPRLEDFLK) is the PIP-box element.

It belongs to the TRAIP family.

It is found in the nucleus. Its subcellular location is the nucleoplasm. The protein localises to the nucleolus. It localises to the chromosome. The protein resides in the cytoplasm. It catalyses the reaction S-ubiquitinyl-[E2 ubiquitin-conjugating enzyme]-L-cysteine + [acceptor protein]-L-lysine = [E2 ubiquitin-conjugating enzyme]-L-cysteine + N(6)-ubiquitinyl-[acceptor protein]-L-lysine.. It functions in the pathway protein modification; protein ubiquitination. Its function is as follows. E3 ubiquitin ligase required to protect genome stability in response to replication stress. Acts as a key regulator of interstrand cross-link repair, which takes place when both strands of duplex DNA are covalently tethered together, thereby blocking replication and transcription. Controls the choice between the two pathways of replication-coupled interstrand-cross-link repair by mediating ubiquitination of mcm7 subunit of the CMG helicase complex. Short ubiquitin chains on mcm7 promote recruitment of DNA glycosylase neil3. If the interstrand cross-link cannot be cleaved by neil3, the ubiquitin chains continue to grow on mcm7, promoting the unloading of the CMG helicase complex by the vcp/p97 ATPase, enabling the Fanconi anemia DNA repair pathway. Only catalyzes ubiquitination of mcm7 when forks converge. Also involved in the repair of covalent DNA-protein cross-links (DPCs) during DNA synthesis: promotes ubiquitination of DPCs, leading to their degradation by the proteasome. Also acts as a negative regulator of innate immune signaling by inhibiting activation of NF-kappa-B mediated by TNF. This chain is E3 ubiquitin-protein ligase TRAIP, found in Xenopus laevis (African clawed frog).